A 137-amino-acid polypeptide reads, in one-letter code: MARVTVEDCIDKVENRFELVLLAGHRARLLSSGAPLTVDRDRDKNPVVALREIADETITPDDLKEQLIHSLQKYVEVDEPEPEAVPLLSSSPAAAAVAPQAASGDDNDIQFDRMSEEDLLRGLENLAPPTETEDEGD.

The disordered stretch occupies residues 78-137 (DEPEPEAVPLLSSSPAAAAVAPQAASGDDNDIQFDRMSEEDLLRGLENLAPPTETEDEGD). Positions 84–103 (AVPLLSSSPAAAAVAPQAAS) are enriched in low complexity. Basic and acidic residues predominate over residues 110 to 121 (QFDRMSEEDLLR).

This sequence belongs to the RNA polymerase subunit omega family. The RNAP catalytic core consists of 2 alpha, 1 beta, 1 beta' and 1 omega subunit. When a sigma factor is associated with the core the holoenzyme is formed, which can initiate transcription.

It carries out the reaction RNA(n) + a ribonucleoside 5'-triphosphate = RNA(n+1) + diphosphate. Functionally, promotes RNA polymerase assembly. Latches the N- and C-terminal regions of the beta' subunit thereby facilitating its interaction with the beta and alpha subunits. In Methylobacterium sp. (strain 4-46), this protein is DNA-directed RNA polymerase subunit omega.